We begin with the raw amino-acid sequence, 530 residues long: Phosphoenolpyruvate carboxykinase (ATP) (530 aa).

Arg60, Tyr195, and Lys201 together coordinate substrate. ATP is bound by residues Lys201, His221, and 237–245; that span reads GLSGTGKTT. Residues Lys201 and His221 each contribute to the Mn(2+) site. Asp258 is a binding site for Mn(2+). Residues Glu286, Arg324, and Ser449 each coordinate ATP. Arg324 provides a ligand contact to substrate.

The protein belongs to the phosphoenolpyruvate carboxykinase (ATP) family. It depends on Mn(2+) as a cofactor.

The protein resides in the cytoplasm. It catalyses the reaction oxaloacetate + ATP = phosphoenolpyruvate + ADP + CO2. The protein operates within carbohydrate biosynthesis; gluconeogenesis. Its function is as follows. Involved in the gluconeogenesis. Catalyzes the conversion of oxaloacetate (OAA) to phosphoenolpyruvate (PEP) through direct phosphoryl transfer between the nucleoside triphosphate and OAA. In Geobacter metallireducens (strain ATCC 53774 / DSM 7210 / GS-15), this protein is Phosphoenolpyruvate carboxykinase (ATP).